Reading from the N-terminus, the 261-residue chain is Cytochrome c oxidase subunit 3 (261 aa).

Topologically, residues 1-15 (MTHQAHAYHMVDPSP) are mitochondrial matrix. Residues 16–34 (WPLTGAVAALLMTSGLAVW) form a helical membrane-spanning segment. The Mitochondrial intermembrane segment spans residues 35–40 (FHFHST). The helical transmembrane segment at 41–66 (TLMALGTVLLLLTMYQWWRDIIREGT) threads the bilayer. Topologically, residues 67–72 (FQGHHT) are mitochondrial matrix. A helical transmembrane segment spans residues 73 to 105 (PPVQKGLRYGMILFITSEVFFFLGFFWAFYHAS). The Mitochondrial intermembrane segment spans residues 106–128 (LAPTPELGGCWPPTGITTLDPFE). Residues 129–152 (VPLLNTAVLLASGVTVTWAHHSIM) traverse the membrane as a helical segment. Topologically, residues 153–155 (EGE) are mitochondrial matrix. Residues 156–183 (RKQAIHSLTLTILLGFYFTFLQGLEYYD) traverse the membrane as a helical segment. Over 184 to 190 (APFTIAD) the chain is Mitochondrial intermembrane. Residues 191-223 (GVYGSTFFVATGFHGLHVIIGSTFLAVCLLRQI) form a helical membrane-spanning segment. Topologically, residues 224–232 (RYHFTSEHH) are mitochondrial matrix. The chain crosses the membrane as a helical span at residues 233–256 (FGFEAAAWYWHFVDVVWLFLYISI). The Mitochondrial intermembrane segment spans residues 257-261 (YWWGS).

This sequence belongs to the cytochrome c oxidase subunit 3 family. In terms of assembly, component of the cytochrome c oxidase (complex IV, CIV), a multisubunit enzyme composed of 14 subunits. The complex is composed of a catalytic core of 3 subunits MT-CO1, MT-CO2 and MT-CO3, encoded in the mitochondrial DNA, and 11 supernumerary subunits COX4I, COX5A, COX5B, COX6A, COX6B, COX6C, COX7A, COX7B, COX7C, COX8 and NDUFA4, which are encoded in the nuclear genome. The complex exists as a monomer or a dimer and forms supercomplexes (SCs) in the inner mitochondrial membrane with NADH-ubiquinone oxidoreductase (complex I, CI) and ubiquinol-cytochrome c oxidoreductase (cytochrome b-c1 complex, complex III, CIII), resulting in different assemblies (supercomplex SCI(1)III(2)IV(1) and megacomplex MCI(2)III(2)IV(2)).

The protein resides in the mitochondrion inner membrane. It carries out the reaction 4 Fe(II)-[cytochrome c] + O2 + 8 H(+)(in) = 4 Fe(III)-[cytochrome c] + 2 H2O + 4 H(+)(out). Its function is as follows. Component of the cytochrome c oxidase, the last enzyme in the mitochondrial electron transport chain which drives oxidative phosphorylation. The respiratory chain contains 3 multisubunit complexes succinate dehydrogenase (complex II, CII), ubiquinol-cytochrome c oxidoreductase (cytochrome b-c1 complex, complex III, CIII) and cytochrome c oxidase (complex IV, CIV), that cooperate to transfer electrons derived from NADH and succinate to molecular oxygen, creating an electrochemical gradient over the inner membrane that drives transmembrane transport and the ATP synthase. Cytochrome c oxidase is the component of the respiratory chain that catalyzes the reduction of oxygen to water. Electrons originating from reduced cytochrome c in the intermembrane space (IMS) are transferred via the dinuclear copper A center (CU(A)) of subunit 2 and heme A of subunit 1 to the active site in subunit 1, a binuclear center (BNC) formed by heme A3 and copper B (CU(B)). The BNC reduces molecular oxygen to 2 water molecules using 4 electrons from cytochrome c in the IMS and 4 protons from the mitochondrial matrix. The protein is Cytochrome c oxidase subunit 3 (mt-co3) of Gadus morhua (Atlantic cod).